We begin with the raw amino-acid sequence, 402 residues long: Acetate kinase (402 aa).

Residue Asn10 coordinates Mg(2+). Lys17 contacts ATP. Arg89 serves as a coordination point for substrate. Residue Asp148 is the Proton donor/acceptor of the active site. ATP-binding positions include 208-212, 283-285, and 334-338; these read HLGNG, DCR, and GIGEN. Glu389 provides a ligand contact to Mg(2+).

It belongs to the acetokinase family. Homodimer. Mg(2+) is required as a cofactor. The cofactor is Mn(2+).

It is found in the cytoplasm. The enzyme catalyses acetate + ATP = acetyl phosphate + ADP. Its pathway is metabolic intermediate biosynthesis; acetyl-CoA biosynthesis; acetyl-CoA from acetate: step 1/2. Catalyzes the formation of acetyl phosphate from acetate and ATP. Can also catalyze the reverse reaction. This chain is Acetate kinase, found in Actinobacillus pleuropneumoniae serotype 7 (strain AP76).